The primary structure comprises 194 residues: Large ribosomal subunit protein bL9 (194 aa).

The interval 148 to 194 (QDEAERQARGENVINSQFEEDRAAEAEAAQDMAEGGAGSFEGDHYEA) is disordered.

The protein belongs to the bacterial ribosomal protein bL9 family.

Functionally, binds to the 23S rRNA. This is Large ribosomal subunit protein bL9 from Caulobacter vibrioides (strain ATCC 19089 / CIP 103742 / CB 15) (Caulobacter crescentus).